The primary structure comprises 242 residues: MKLNIAYPAQGTQKCIDIEDEHRVRGFYEKRMGQEVEADFLGDEFKGYVLKITGGNDKQGFPMKQGVMHPTRVRLLLSKDSSCYRSRRAGERKRKSVRGCIVSSDLSVLSVVIVKQGDADIEGLTTETVPRRLGPKRANNIRKLFALSKEDDVRQYVIRREVTTKSGKTYTKAPKIQRLITPRRLAHKAQLREKKVKAIQASKDAAAEYAQLLAKRVAEKKSEKAEEKKRRASSLRTQSVQA.

A compositionally biased stretch (basic and acidic residues) spans 219–229 (EKKSEKAEEKK). The disordered stretch occupies residues 219–242 (EKKSEKAEEKKRRASSLRTQSVQA). 2 positions are modified to phosphoserine: Ser233 and Ser234.

The protein belongs to the eukaryotic ribosomal protein eS6 family. In terms of processing, phosphorylated.

The polypeptide is Small ribosomal subunit protein eS6 (RPS6) (Yarrowia lipolytica (strain CLIB 122 / E 150) (Yeast)).